A 247-amino-acid chain; its full sequence is UDP-2,3-diacylglucosamine hydrolase (247 aa).

Asp8, His10, Asp41, Asn79, and His114 together coordinate Mn(2+). Residue 79–80 (NR) participates in substrate binding. Residues Asp122, Ser160, Asp171, Gln174, and His202 each coordinate substrate. His202 and His204 together coordinate Mn(2+).

It belongs to the LpxH family. Mn(2+) is required as a cofactor.

It is found in the cell inner membrane. The enzyme catalyses UDP-2-N,3-O-bis[(3R)-3-hydroxytetradecanoyl]-alpha-D-glucosamine + H2O = 2-N,3-O-bis[(3R)-3-hydroxytetradecanoyl]-alpha-D-glucosaminyl 1-phosphate + UMP + 2 H(+). The protein operates within glycolipid biosynthesis; lipid IV(A) biosynthesis; lipid IV(A) from (3R)-3-hydroxytetradecanoyl-[acyl-carrier-protein] and UDP-N-acetyl-alpha-D-glucosamine: step 4/6. In terms of biological role, hydrolyzes the pyrophosphate bond of UDP-2,3-diacylglucosamine to yield 2,3-diacylglucosamine 1-phosphate (lipid X) and UMP by catalyzing the attack of water at the alpha-P atom. Involved in the biosynthesis of lipid A, a phosphorylated glycolipid that anchors the lipopolysaccharide to the outer membrane of the cell. The chain is UDP-2,3-diacylglucosamine hydrolase from Xanthomonas campestris pv. campestris (strain 8004).